A 225-amino-acid chain; its full sequence is Protein-L-isoaspartate O-methyltransferase (225 aa).

S63 is a catalytic residue.

Belongs to the methyltransferase superfamily. L-isoaspartyl/D-aspartyl protein methyltransferase family.

It localises to the cytoplasm. The enzyme catalyses [protein]-L-isoaspartate + S-adenosyl-L-methionine = [protein]-L-isoaspartate alpha-methyl ester + S-adenosyl-L-homocysteine. Its function is as follows. Catalyzes the methyl esterification of L-isoaspartyl residues in peptides and proteins that result from spontaneous decomposition of normal L-aspartyl and L-asparaginyl residues. It plays a role in the repair and/or degradation of damaged proteins. The sequence is that of Protein-L-isoaspartate O-methyltransferase from Staphylothermus marinus (strain ATCC 43588 / DSM 3639 / JCM 9404 / F1).